Consider the following 211-residue polypeptide: FMN-dependent NADH:quinone oxidoreductase (211 aa).

17–19 (SYS) lines the FMN pocket.

It belongs to the azoreductase type 1 family. In terms of assembly, homodimer. The cofactor is FMN.

It catalyses the reaction 2 a quinone + NADH + H(+) = 2 a 1,4-benzosemiquinone + NAD(+). The enzyme catalyses N,N-dimethyl-1,4-phenylenediamine + anthranilate + 2 NAD(+) = 2-(4-dimethylaminophenyl)diazenylbenzoate + 2 NADH + 2 H(+). Quinone reductase that provides resistance to thiol-specific stress caused by electrophilic quinones. In terms of biological role, also exhibits azoreductase activity. Catalyzes the reductive cleavage of the azo bond in aromatic azo compounds to the corresponding amines. The chain is FMN-dependent NADH:quinone oxidoreductase from Bacillus pumilus (strain SAFR-032).